The following is a 477-amino-acid chain: UDP-N-acetylglucosamine pyrophosphorylase (477 aa).

The Substrate binding signature appears at Met109–Gly112. Residues Met109–Gly112, Lys123, and Gln194 contribute to the UTP site. Ser218 carries the post-translational modification Phosphoserine. Gly221 is a binding site for UTP. Asn222 lines the substrate pocket. UTP is bound at residue Asp252. The Substrate binding motif lies at Glu302–Tyr303. Lys377 contacts UTP. A substrate-binding site is contributed by Lys409. Phosphoserine is present on Ser461.

The protein belongs to the UDPGP type 1 family.

Its subcellular location is the cytoplasm. It catalyses the reaction N-acetyl-alpha-D-glucosamine 1-phosphate + UTP + H(+) = UDP-N-acetyl-alpha-D-glucosamine + diphosphate. It participates in nucleotide-sugar biosynthesis; UDP-N-acetyl-alpha-D-glucosamine biosynthesis; UDP-N-acetyl-alpha-D-glucosamine from N-acetyl-alpha-D-glucosamine 1-phosphate: step 1/1. Functionally, UDP-N-acetylglucosamine pyrophosphorylase that utilizes N-acetylglucosamine-1-phosphate as substrate. Together with AGM1, is involved in the production of UDP-N-acetylglucosamine from N-acetylglucosamine-6-phosphate. This chain is UDP-N-acetylglucosamine pyrophosphorylase (QRI1), found in Saccharomyces cerevisiae (strain ATCC 204508 / S288c) (Baker's yeast).